The primary structure comprises 84 residues: Small ribosomal subunit protein bS18 (84 aa).

Belongs to the bacterial ribosomal protein bS18 family. As to quaternary structure, part of the 30S ribosomal subunit. Forms a tight heterodimer with protein bS6.

Its function is as follows. Binds as a heterodimer with protein bS6 to the central domain of the 16S rRNA, where it helps stabilize the platform of the 30S subunit. This chain is Small ribosomal subunit protein bS18, found in Helicobacter hepaticus (strain ATCC 51449 / 3B1).